A 336-amino-acid chain; its full sequence is Eukaryotic translation initiation factor 3 subunit H (336 aa).

The MPN domain maps to 21-154 (VQCDGLAAMK…LKAYRLTPQA (134 aa)).

This sequence belongs to the eIF-3 subunit H family. As to quaternary structure, component of the eukaryotic translation initiation factor 3 (eIF-3) complex.

The protein resides in the cytoplasm. Functionally, component of the eukaryotic translation initiation factor 3 (eIF-3) complex, which is involved in protein synthesis of a specialized repertoire of mRNAs and, together with other initiation factors, stimulates binding of mRNA and methionyl-tRNAi to the 40S ribosome. The eIF-3 complex specifically targets and initiates translation of a subset of mRNAs involved in cell proliferation. The sequence is that of Eukaryotic translation initiation factor 3 subunit H from Culex quinquefasciatus (Southern house mosquito).